The sequence spans 310 residues: tRNA dimethylallyltransferase 2 (310 aa).

15–22 is an ATP binding site; that stretch reads GPTASGKT. Residue 17-22 coordinates substrate; that stretch reads TASGKT. The interaction with substrate tRNA stretch occupies residues 40–43; that stretch reads DSMQ.

It belongs to the IPP transferase family. Monomer. The cofactor is Mg(2+).

It catalyses the reaction adenosine(37) in tRNA + dimethylallyl diphosphate = N(6)-dimethylallyladenosine(37) in tRNA + diphosphate. Its function is as follows. Catalyzes the transfer of a dimethylallyl group onto the adenine at position 37 in tRNAs that read codons beginning with uridine, leading to the formation of N6-(dimethylallyl)adenosine (i(6)A). This is tRNA dimethylallyltransferase 2 from Geotalea uraniireducens (strain Rf4) (Geobacter uraniireducens).